A 149-amino-acid chain; its full sequence is Ribosome-binding factor A (149 aa).

The tract at residues 123-149 is disordered; that stretch reads LAKLREGAAPAGDADPYKTSSKSESEE.

The protein belongs to the RbfA family. As to quaternary structure, monomer. Binds 30S ribosomal subunits, but not 50S ribosomal subunits or 70S ribosomes.

It localises to the cytoplasm. In terms of biological role, one of several proteins that assist in the late maturation steps of the functional core of the 30S ribosomal subunit. Associates with free 30S ribosomal subunits (but not with 30S subunits that are part of 70S ribosomes or polysomes). Required for efficient processing of 16S rRNA. May interact with the 5'-terminal helix region of 16S rRNA. The chain is Ribosome-binding factor A from Corynebacterium glutamicum (strain ATCC 13032 / DSM 20300 / JCM 1318 / BCRC 11384 / CCUG 27702 / LMG 3730 / NBRC 12168 / NCIMB 10025 / NRRL B-2784 / 534).